A 425-amino-acid polypeptide reads, in one-letter code: Serine--tRNA ligase (425 aa).

Residue 230–232 (TAE) coordinates L-serine. 261–263 (RSE) contacts ATP. An L-serine-binding site is contributed by Glu284. 348 to 351 (EISS) provides a ligand contact to ATP. Position 384 (Ser384) interacts with L-serine.

This sequence belongs to the class-II aminoacyl-tRNA synthetase family. Type-1 seryl-tRNA synthetase subfamily. In terms of assembly, homodimer. The tRNA molecule binds across the dimer.

It localises to the cytoplasm. The enzyme catalyses tRNA(Ser) + L-serine + ATP = L-seryl-tRNA(Ser) + AMP + diphosphate + H(+). The catalysed reaction is tRNA(Sec) + L-serine + ATP = L-seryl-tRNA(Sec) + AMP + diphosphate + H(+). The protein operates within aminoacyl-tRNA biosynthesis; selenocysteinyl-tRNA(Sec) biosynthesis; L-seryl-tRNA(Sec) from L-serine and tRNA(Sec): step 1/1. Functionally, catalyzes the attachment of serine to tRNA(Ser). Is also able to aminoacylate tRNA(Sec) with serine, to form the misacylated tRNA L-seryl-tRNA(Sec), which will be further converted into selenocysteinyl-tRNA(Sec). The sequence is that of Serine--tRNA ligase from Streptococcus pyogenes serotype M5 (strain Manfredo).